The sequence spans 485 residues: MHNKSVAELSRELESGRISSVELTQQFLDRLKTEDGKYNSFITISDEQALAEARAADEMRAAGKATVWTGVPFAHKDIFCTSGIRTSCGSKMLDNFVPPYDATVTANFKAAGAVCLGKTNMDEFAMGSSNESSFYGAVTNPWGLSGGDKRVPGGSSGGSAAAVAARLVPAATGTDTGGSIRQPAALCGITGLKPTYGRVSRYGMIAFASSLDQGGPMARTAEDAALMLNVMAGHDPKDSTCIDREVPDYTATLNEPLKGLKIGLPKEYFSDQLAPAMEEQVRNAIREYEKLGATVKEVSLPNAKLAIAAYYVIAPAEASANLSRFDGVRYGYRCEDPKDLMDMYTRSRAEGFGNEVKRRILVGSYALSAGYFDAYYLKAQKVRRLIQQDFINAFKEVDVLMSPVSPTPAFRQGEKNTDPVSMYLEDVFTIAINLAGIPAMSVPAGFVDGLPVGLQIIGDYFSEARLLNAAHQFQQVTDWHQREPQ.

Residues K76 and S155 each act as charge relay system in the active site. S179 functions as the Acyl-ester intermediate in the catalytic mechanism.

Belongs to the amidase family. GatA subfamily. Heterotrimer of A, B and C subunits.

It catalyses the reaction L-glutamyl-tRNA(Gln) + L-glutamine + ATP + H2O = L-glutaminyl-tRNA(Gln) + L-glutamate + ADP + phosphate + H(+). Its function is as follows. Allows the formation of correctly charged Gln-tRNA(Gln) through the transamidation of misacylated Glu-tRNA(Gln) in organisms which lack glutaminyl-tRNA synthetase. The reaction takes place in the presence of glutamine and ATP through an activated gamma-phospho-Glu-tRNA(Gln). The chain is Glutamyl-tRNA(Gln) amidotransferase subunit A from Marinobacter nauticus (strain ATCC 700491 / DSM 11845 / VT8) (Marinobacter aquaeolei).